A 268-amino-acid polypeptide reads, in one-letter code: Protein APE_1980.1 (268 aa).

This sequence belongs to the CinA family.

This Aeropyrum pernix (strain ATCC 700893 / DSM 11879 / JCM 9820 / NBRC 100138 / K1) protein is Protein APE_1980.1.